We begin with the raw amino-acid sequence, 148 residues long: SsrA-binding protein (148 aa).

Positions 124-148 are disordered; that stretch reads QFDKRETEKDRDWQREKARLMREKA.

This sequence belongs to the SmpB family.

The protein localises to the cytoplasm. Functionally, required for rescue of stalled ribosomes mediated by trans-translation. Binds to transfer-messenger RNA (tmRNA), required for stable association of tmRNA with ribosomes. tmRNA and SmpB together mimic tRNA shape, replacing the anticodon stem-loop with SmpB. tmRNA is encoded by the ssrA gene; the 2 termini fold to resemble tRNA(Ala) and it encodes a 'tag peptide', a short internal open reading frame. During trans-translation Ala-aminoacylated tmRNA acts like a tRNA, entering the A-site of stalled ribosomes, displacing the stalled mRNA. The ribosome then switches to translate the ORF on the tmRNA; the nascent peptide is terminated with the 'tag peptide' encoded by the tmRNA and targeted for degradation. The ribosome is freed to recommence translation, which seems to be the essential function of trans-translation. This is SsrA-binding protein from Ralstonia pickettii (strain 12J).